The following is a 357-amino-acid chain: 3-isopropylmalate dehydrogenase (357 aa).

Position 75 to 88 (75 to 88 (GPKWEHLPPAEQPE)) interacts with NAD(+). Substrate-binding residues include R96, R106, R135, and D224. Residues D224, D248, and D252 each coordinate Mg(2+). Residue 282 to 294 (GSAPDIAGQGIAN) participates in NAD(+) binding.

Belongs to the isocitrate and isopropylmalate dehydrogenases family. LeuB type 1 subfamily. In terms of assembly, homodimer. Requires Mg(2+) as cofactor. The cofactor is Mn(2+).

The protein resides in the cytoplasm. The catalysed reaction is (2R,3S)-3-isopropylmalate + NAD(+) = 4-methyl-2-oxopentanoate + CO2 + NADH. It participates in amino-acid biosynthesis; L-leucine biosynthesis; L-leucine from 3-methyl-2-oxobutanoate: step 3/4. Functionally, catalyzes the oxidation of 3-carboxy-2-hydroxy-4-methylpentanoate (3-isopropylmalate) to 3-carboxy-4-methyl-2-oxopentanoate. The product decarboxylates to 4-methyl-2 oxopentanoate. The protein is 3-isopropylmalate dehydrogenase of Desulfotalea psychrophila (strain LSv54 / DSM 12343).